Here is a 400-residue protein sequence, read N- to C-terminus: Exodeoxyribonuclease 7 large subunit (400 aa).

This sequence belongs to the XseA family. Heterooligomer composed of large and small subunits.

Its subcellular location is the cytoplasm. The catalysed reaction is Exonucleolytic cleavage in either 5'- to 3'- or 3'- to 5'-direction to yield nucleoside 5'-phosphates.. Functionally, bidirectionally degrades single-stranded DNA into large acid-insoluble oligonucleotides, which are then degraded further into small acid-soluble oligonucleotides. In Clostridium perfringens (strain 13 / Type A), this protein is Exodeoxyribonuclease 7 large subunit.